The following is a 318-amino-acid chain: Homoserine kinase (318 aa).

97–107 (PIGSGLGSSAC) contacts ATP.

The protein belongs to the GHMP kinase family. Homoserine kinase subfamily.

It is found in the cytoplasm. It catalyses the reaction L-homoserine + ATP = O-phospho-L-homoserine + ADP + H(+). It functions in the pathway amino-acid biosynthesis; L-threonine biosynthesis; L-threonine from L-aspartate: step 4/5. Catalyzes the ATP-dependent phosphorylation of L-homoserine to L-homoserine phosphate. This is Homoserine kinase from Aliivibrio salmonicida (strain LFI1238) (Vibrio salmonicida (strain LFI1238)).